We begin with the raw amino-acid sequence, 61 residues long: Alpha-conotoxin-like Tx1.2 (61 aa).

An N-terminal signal peptide occupies residues 1–20 (MFTVFLLVVLATTVVSFTSG). Positions 21 to 42 (RSTFRGRNAAAKASGLVSLTDR) are excised as a propeptide. 2 positions are modified to 4-hydroxyproline: proline 44 and proline 50. Disulfide bonds link cysteine 46-cysteine 52 and cysteine 47-cysteine 60. Positions 48-50 (SHP) are ser-Xaa-Pro motif, crucial for potent interaction with nAChR.

This sequence belongs to the conotoxin A superfamily. As to expression, expressed by the venom duct.

It localises to the secreted. In terms of biological role, alpha-conotoxins act on postsynaptic membranes, they bind to the nicotinic acetylcholine receptors (nAChR) and thus inhibit them. This toxin also inhibits high voltage-activated (HVA) calcium channel currents in rat DRG neurons (8% inhibition at 1 uM toxin) probably by activating GABA(B) receptors (GABBR1 and/or GABBR2). In Conus textile (Cloth-of-gold cone), this protein is Alpha-conotoxin-like Tx1.2.